A 250-amino-acid polypeptide reads, in one-letter code: MKQNIKLGVIAALMLIVLTPVTSNAMHIMEGYLPVKWSIAWGVIFIPFFLVGLKSIGKIVKQDPKKKVLLALCGAFVFVLSALKIPSVTGSCSHPTGVGLGAIMFGPSVMFVLGTIVLIFQALLLAHGGITTLGANAFSMAIIGPIISFLIFKALKKKDGNNAMPVFLAAAIGDLATYTVTSIQLALAFPDPSGGVMASAIKFLGIFFMTQIPIAIAEGILTVIVYNLITENGEKSILENNDKGVKANEC.

Residues 1 to 25 (MKQNIKLGVIAALMLIVLTPVTSNA) form the signal peptide. The next 6 membrane-spanning stretches (helical) occupy residues 33–53 (LPVK…LVGL), 68–88 (VLLA…IPSV), 100–120 (LGAI…VLIF), 132–152 (TLGA…FLIF), 163–183 (AMPV…VTSI), and 205–225 (GIFF…TVIV).

It belongs to the CbiM family. In terms of assembly, forms an energy-coupling factor (ECF) transporter complex composed of an ATP-binding protein (A component, CbiO), a transmembrane protein (T component, CbiQ) and 2 possible substrate-capture proteins (S components, CbiM and CbiN) of unknown stoichimetry.

Its subcellular location is the cell membrane. It functions in the pathway cofactor biosynthesis; adenosylcobalamin biosynthesis. Part of the energy-coupling factor (ECF) transporter complex CbiMNOQ involved in cobalt import. This Clostridioides difficile (strain R20291) (Peptoclostridium difficile) protein is Cobalt transport protein CbiM.